Consider the following 338-residue polypeptide: Outer membrane transporter protein TsaT (338 aa).

The first 22 residues, 1–22, serve as a signal peptide directing secretion; that stretch reads MNFRRRLCTAALIAALPLASQA.

In terms of assembly, part of a two-component transport system composed of TsaT and TsaS.

It is found in the cell outer membrane. Its function is as follows. Involved in the uptake of p-toluenesulphonate (TSA). Forms a large, general diffusion pore with a preference for anions. This chain is Outer membrane transporter protein TsaT (tsaT), found in Comamonas testosteroni (Pseudomonas testosteroni).